The following is a 366-amino-acid chain: Chorismate synthase (366 aa).

Arg48 contributes to the NADP(+) binding site. Residues 125–127 (RSS), 238–239 (NA), Gly278, 293–297 (KPTSS), and Arg319 each bind FMN.

Belongs to the chorismate synthase family. As to quaternary structure, homotetramer. FMNH2 serves as cofactor.

The catalysed reaction is 5-O-(1-carboxyvinyl)-3-phosphoshikimate = chorismate + phosphate. The protein operates within metabolic intermediate biosynthesis; chorismate biosynthesis; chorismate from D-erythrose 4-phosphate and phosphoenolpyruvate: step 7/7. Catalyzes the anti-1,4-elimination of the C-3 phosphate and the C-6 proR hydrogen from 5-enolpyruvylshikimate-3-phosphate (EPSP) to yield chorismate, which is the branch point compound that serves as the starting substrate for the three terminal pathways of aromatic amino acid biosynthesis. This reaction introduces a second double bond into the aromatic ring system. The chain is Chorismate synthase from Hydrogenovibrio crunogenus (strain DSM 25203 / XCL-2) (Thiomicrospira crunogena).